A 436-amino-acid chain; its full sequence is Nicotinate phosphoribosyltransferase (436 aa).

Histidine 231 bears the Phosphohistidine; by autocatalysis mark.

It belongs to the NAPRTase family. Transiently phosphorylated on a His residue during the reaction cycle. Phosphorylation strongly increases the affinity for substrates and increases the rate of nicotinate D-ribonucleotide production. Dephosphorylation regenerates the low-affinity form of the enzyme, leading to product release.

It carries out the reaction nicotinate + 5-phospho-alpha-D-ribose 1-diphosphate + ATP + H2O = nicotinate beta-D-ribonucleotide + ADP + phosphate + diphosphate. Its pathway is cofactor biosynthesis; NAD(+) biosynthesis; nicotinate D-ribonucleotide from nicotinate: step 1/1. In terms of biological role, catalyzes the synthesis of beta-nicotinate D-ribonucleotide from nicotinate and 5-phospho-D-ribose 1-phosphate at the expense of ATP. The protein is Nicotinate phosphoribosyltransferase of Vibrio parahaemolyticus serotype O3:K6 (strain RIMD 2210633).